Consider the following 96-residue polypeptide: Co-chaperonin GroES (96 aa).

Belongs to the GroES chaperonin family. As to quaternary structure, heptamer of 7 subunits arranged in a ring. Interacts with the chaperonin GroEL.

The protein localises to the cytoplasm. Together with the chaperonin GroEL, plays an essential role in assisting protein folding. The GroEL-GroES system forms a nano-cage that allows encapsulation of the non-native substrate proteins and provides a physical environment optimized to promote and accelerate protein folding. GroES binds to the apical surface of the GroEL ring, thereby capping the opening of the GroEL channel. This chain is Co-chaperonin GroES, found in Hydrogenovibrio crunogenus (strain DSM 25203 / XCL-2) (Thiomicrospira crunogena).